A 393-amino-acid chain; its full sequence is ATP phosphoribosyltransferase regulatory subunit (393 aa).

This sequence belongs to the class-II aminoacyl-tRNA synthetase family. HisZ subfamily. As to quaternary structure, heteromultimer composed of HisG and HisZ subunits.

The protein resides in the cytoplasm. It participates in amino-acid biosynthesis; L-histidine biosynthesis; L-histidine from 5-phospho-alpha-D-ribose 1-diphosphate: step 1/9. Its function is as follows. Required for the first step of histidine biosynthesis. May allow the feedback regulation of ATP phosphoribosyltransferase activity by histidine. The sequence is that of ATP phosphoribosyltransferase regulatory subunit from Shouchella clausii (strain KSM-K16) (Alkalihalobacillus clausii).